The following is a 469-amino-acid chain: Probable cobyric acid synthase (469 aa).

The region spanning 241-427 is the GATase cobBQ-type domain; that stretch reads SGSIGIVRYP…VHGILENNEF (187 aa). Cysteine 319 serves as the catalytic Nucleophile. Residue histidine 419 is part of the active site.

Belongs to the CobB/CobQ family. CobQ subfamily.

It participates in cofactor biosynthesis; adenosylcobalamin biosynthesis. In terms of biological role, catalyzes amidations at positions B, D, E, and G on adenosylcobyrinic A,C-diamide. NH(2) groups are provided by glutamine, and one molecule of ATP is hydrogenolyzed for each amidation. This is Probable cobyric acid synthase from Picrophilus torridus (strain ATCC 700027 / DSM 9790 / JCM 10055 / NBRC 100828 / KAW 2/3).